Reading from the N-terminus, the 372-residue chain is tRNA-specific 2-thiouridylase MnmA (372 aa).

Residues G17–S24 and M43 contribute to the ATP site. An interaction with target base in tRNA region spans residues N103 to D105. The active-site Nucleophile is C108. A disulfide bond links C108 and C207. G133 serves as a coordination point for ATP. An interaction with tRNA region spans residues K157–Q159. C207 functions as the Cysteine persulfide intermediate in the catalytic mechanism. Positions R319–Y320 are interaction with tRNA.

It belongs to the MnmA/TRMU family.

Its subcellular location is the cytoplasm. It carries out the reaction S-sulfanyl-L-cysteinyl-[protein] + uridine(34) in tRNA + AH2 + ATP = 2-thiouridine(34) in tRNA + L-cysteinyl-[protein] + A + AMP + diphosphate + H(+). Catalyzes the 2-thiolation of uridine at the wobble position (U34) of tRNA, leading to the formation of s(2)U34. This Vibrio cholerae serotype O1 (strain ATCC 39541 / Classical Ogawa 395 / O395) protein is tRNA-specific 2-thiouridylase MnmA.